The chain runs to 461 residues: Phosphoglucosamine mutase (461 aa).

Ser118 (phosphoserine intermediate) is an active-site residue. Mg(2+) is bound by residues Ser118, Asp255, Asp257, and Asp259. Position 118 is a phosphoserine (Ser118).

The protein belongs to the phosphohexose mutase family. Mg(2+) serves as cofactor. Post-translationally, activated by phosphorylation.

The catalysed reaction is alpha-D-glucosamine 1-phosphate = D-glucosamine 6-phosphate. Functionally, catalyzes the conversion of glucosamine-6-phosphate to glucosamine-1-phosphate. The sequence is that of Phosphoglucosamine mutase from Acidothermus cellulolyticus (strain ATCC 43068 / DSM 8971 / 11B).